A 1140-amino-acid polypeptide reads, in one-letter code: Envelopment polyprotein (1140 aa).

The signal sequence occupies residues 1-17; that stretch reads MVGWVCIFLVVLTTATA. Residues 18-480 lie on the Lumenal side of the membrane; that stretch reads GLTRNLYELK…AHSLAVELCV (463 aa). 6 disulfides stabilise this stretch: cysteine 30–cysteine 155, cysteine 64–cysteine 161, cysteine 113–cysteine 132, cysteine 137–cysteine 142, cysteine 179–cysteine 189, and cysteine 214–cysteine 251. Asparagine 138 carries an N-linked (GlcNAc...) asparagine; by host glycan. A glycan (N-linked (GlcNAc...) asparagine; by host) is linked at asparagine 351. 4 cysteine pairs are disulfide-bonded: cysteine 380–cysteine 439, cysteine 384–cysteine 393, cysteine 409–cysteine 428, and cysteine 456–cysteine 479. N-linked (GlcNAc...) asparagine; by host glycosylation is present at asparagine 403. Residues 490-510 traverse the membrane as a helical segment; sequence ALLITFCFGWLLIPAVTLIIL. At 511–631 the chain is on the cytoplasmic side; sequence KILRLLTFSC…LGVFRYKSRC (121 aa). The interval 520–537 is binding to the ribonucleoprotein; that stretch reads CSHYSTESKFKVILERVK. 2 CCHC-type zinc fingers span residues 549–569 and 574–595; these read CDIC…KKSC and CPYC…FAIC. Binding to the ribonucleoprotein stretches follow at residues 592–609, 596–607, and 615–629; these read FAIC…KKSL, KLTNRFQENLKK, and RKGC…RYKS. Residues 615–638 enclose the ITAM domain; that stretch reads RKGCYRTLGVFRYKSRCYVGLVWG. Residues tyrosine 619 and tyrosine 632 each carry the phosphotyrosine modification. The short motif at 619-622 is the YxxL element; the sequence is YRTL. A helical transmembrane segment spans residues 632–652; sequence YVGLVWGILLTTELIIWAASA. The Lumenal segment spans residues 653-1108; it reads DTPLMESGWS…EWLLGILNGN (456 aa). Disulfide bonds link cysteine 739–cysteine 774, cysteine 743–cysteine 781, cysteine 755–cysteine 888, cysteine 769–cysteine 899, cysteine 784–cysteine 907, cysteine 810–cysteine 819, cysteine 827–cysteine 836, and cysteine 867–cysteine 871. Residues 761–781 form a fusion loop region; sequence YQYETSWGCNPPDCPGVGTGC. The N-linked (GlcNAc...) asparagine; by host glycan is linked to asparagine 931. Intrachain disulfides connect cysteine 973/cysteine 1003, cysteine 996/cysteine 1048, cysteine 1013/cysteine 1018, cysteine 1049/cysteine 1054, and cysteine 1088/cysteine 1092. A helical transmembrane segment spans residues 1109 to 1129; sequence WVVVAVLIVILILSILLFSFF. Positions 1125–1140 are binding to the ribonucleoprotein; that stretch reads LFSFFCPVRSRKNKAN. The Cytoplasmic segment spans residues 1130–1140; that stretch reads CPVRSRKNKAN.

Belongs to the hantavirus envelope glycoprotein family. Homodimer. Homotetramer; forms heterotetrameric Gn-Gc spikes in the pre-fusion conformation. Interacts (via C-terminus) with the nucleoprotein. Interacts with host TUFM; this interaction contributes to the virus-induced degradation of mitochondria by autophagy, which leads to degradation of host MAVS and inhibition of type I interferon (IFN) responses. Interacts with host MAP1LC3B; this interaction contributes to the virus-induced degradation of mitochondria by autophagy, which leads to degradation of host MAVS and inhibition of type I interferon (IFN) responses. As to quaternary structure, homodimer. Homotetramer; forms heterotetrameric Gn-Gc spikes in the pre-fusion conformation. Homotrimer; forms homotrimer in the post-fusion conformation at acidic pH. Interacts (via C-terminus) with the nucleoprotein. In terms of processing, envelope polyprotein precursor is quickly cleaved in vivo just after synthesis, presumably by host signal peptidase.

It is found in the virion membrane. It localises to the host cell surface. Its subcellular location is the host Golgi apparatus membrane. The protein localises to the host endoplasmic reticulum membrane. The protein resides in the host mitochondrion. In terms of biological role, forms homotetramers with glycoprotein C at the surface of the virion. Attaches the virion to host cell receptors including integrin ITGAV/ITGB3. This attachment induces virion internalization predominantly through clathrin-dependent endocytosis. Mediates the assembly and budding of infectious virus particles through its interaction with the nucleocapsid protein and the viral genome. May dysregulate normal immune and endothelial cell responses through an ITAM motif. Translocates to mitochondria, binds to host TUFM and recruits MAP1LC3B. These interactions induce mitochondrial autophagy and therefore destruction of host MAVS leading to inhibition of type I interferon (IFN) responses. Concomitant breakdown of glycoprotein N is apparently prevented by the nucleoprotein that may inhibit Gn-stimulated autophagosome-lysosome fusion. Interacts with the viral genomic RNA. Forms homotetramers with glycoprotein N at the surface of the virion. Attaches the virion to host cell receptors including integrin ITGAV/ITGB3. This attachment induces virion internalization predominantly through clathrin-dependent endocytosis. Class II fusion protein that promotes fusion of viral membrane with host endosomal membrane after endocytosis of the virion. The chain is Envelopment polyprotein (GP) from Sin Nombre orthohantavirus (SNV).